The chain runs to 227 residues: Urease accessory protein UreF (227 aa).

This sequence belongs to the UreF family. In terms of assembly, ureD, UreF and UreG form a complex that acts as a GTP-hydrolysis-dependent molecular chaperone, activating the urease apoprotein by helping to assemble the nickel containing metallocenter of UreC. The UreE protein probably delivers the nickel.

The protein resides in the cytoplasm. Its function is as follows. Required for maturation of urease via the functional incorporation of the urease nickel metallocenter. The protein is Urease accessory protein UreF of Bacillus sp. (strain TB-90).